The primary structure comprises 548 residues: Cilia- and flagella-associated protein 97 (548 aa).

S8 and S19 each carry phosphoserine. 3 disordered regions span residues N85–N297, L407–L431, and Y497–H548. A compositionally biased stretch (basic and acidic residues) spans G91–N107. Positions T112–S121 are enriched in low complexity. Residues D152 to S161 are compositionally biased toward acidic residues. Residue T155 is modified to Phosphothreonine. 2 positions are modified to phosphoserine: S160 and S161. Over residues K191–S209 the composition is skewed to low complexity. Positions D214–K237 are enriched in polar residues. Residue S235 is modified to Phosphoserine. Over residues Q238 to A248 the composition is skewed to basic residues. S259 carries the post-translational modification Phosphoserine. The span at T264–K289 shows a compositional bias: polar residues. Residues R383–K460 adopt a coiled-coil conformation. Composition is skewed to polar residues over residues S504–S514 and I537–H548.

Belongs to the CFAP97 family.

The polypeptide is Cilia- and flagella-associated protein 97 (Rattus norvegicus (Rat)).